A 215-amino-acid chain; its full sequence is MNELTAFNEQRAEIYWWLSSLLSAELTTEQLEQYGSFEVRTFLSNLAETPELSDSVNALIEKLNAVQGREDAQLELSADFCDAFLGSDKSSALPYASMYLDKSGLLNAKPAQDMREWLTKYNIAQKAEFNEPADHIAIELDFLGNLIVMTNQQVSEDEFEAYMSAQLTFINEQLLSWTPRFNEICIERDKFGFYAAVTGLLVTFLKLDVKFLAGE.

It belongs to the TorD/DmsD family. TorD subfamily.

The protein localises to the cytoplasm. Functionally, involved in the biogenesis of TorA. Acts on TorA before the insertion of the molybdenum cofactor and, as a result, probably favors a conformation of the apoenzyme that is competent for acquiring the cofactor. The chain is Chaperone protein TorD from Aliivibrio fischeri (strain ATCC 700601 / ES114) (Vibrio fischeri).